Reading from the N-terminus, the 204-residue chain is Protein GrpE (204 aa).

The segment at 1–55 (MSSKNNPESETKAKNKWEKVMEAEEEQEEGRGDGSQEMEPHREGLEFPSREKLEG) is disordered. Composition is skewed to basic and acidic residues over residues 7-22 (PESETKAKNKWEKVME) and 29-55 (EGRGDGSQEMEPHREGLEFPSREKLEG).

Belongs to the GrpE family. Homodimer.

The protein resides in the cytoplasm. Functionally, participates actively in the response to hyperosmotic and heat shock by preventing the aggregation of stress-denatured proteins, in association with DnaK and GrpE. It is the nucleotide exchange factor for DnaK and may function as a thermosensor. Unfolded proteins bind initially to DnaJ; upon interaction with the DnaJ-bound protein, DnaK hydrolyzes its bound ATP, resulting in the formation of a stable complex. GrpE releases ADP from DnaK; ATP binding to DnaK triggers the release of the substrate protein, thus completing the reaction cycle. Several rounds of ATP-dependent interactions between DnaJ, DnaK and GrpE are required for fully efficient folding. This chain is Protein GrpE, found in Coxiella burnetii (strain RSA 331 / Henzerling II).